The primary structure comprises 313 residues: tRNA dimethylallyltransferase (313 aa).

10 to 17 (GPTAVGKS) lines the ATP pocket. Substrate is bound at residue 12-17 (TAVGKS). The segment at 35 to 38 (DSTQ) is interaction with substrate tRNA.

It belongs to the IPP transferase family. In terms of assembly, monomer. Requires Mg(2+) as cofactor.

The catalysed reaction is adenosine(37) in tRNA + dimethylallyl diphosphate = N(6)-dimethylallyladenosine(37) in tRNA + diphosphate. In terms of biological role, catalyzes the transfer of a dimethylallyl group onto the adenine at position 37 in tRNAs that read codons beginning with uridine, leading to the formation of N6-(dimethylallyl)adenosine (i(6)A). The chain is tRNA dimethylallyltransferase from Oceanobacillus iheyensis (strain DSM 14371 / CIP 107618 / JCM 11309 / KCTC 3954 / HTE831).